We begin with the raw amino-acid sequence, 290 residues long: 4-hydroxy-tetrahydrodipicolinate synthase (290 aa).

Residue threonine 44 participates in pyruvate binding. The active-site Proton donor/acceptor is the tyrosine 132. Lysine 160 (schiff-base intermediate with substrate) is an active-site residue. Isoleucine 202 is a binding site for pyruvate.

The protein belongs to the DapA family. Homotetramer; dimer of dimers.

The protein resides in the cytoplasm. The catalysed reaction is L-aspartate 4-semialdehyde + pyruvate = (2S,4S)-4-hydroxy-2,3,4,5-tetrahydrodipicolinate + H2O + H(+). The protein operates within amino-acid biosynthesis; L-lysine biosynthesis via DAP pathway; (S)-tetrahydrodipicolinate from L-aspartate: step 3/4. In terms of biological role, catalyzes the condensation of (S)-aspartate-beta-semialdehyde [(S)-ASA] and pyruvate to 4-hydroxy-tetrahydrodipicolinate (HTPA). The sequence is that of 4-hydroxy-tetrahydrodipicolinate synthase from Legionella pneumophila subsp. pneumophila (strain Philadelphia 1 / ATCC 33152 / DSM 7513).